We begin with the raw amino-acid sequence, 429 residues long: Cytochrome c biogenesis protein CcsB (429 aa).

Helical transmembrane passes span 14–34 (LKVA…GTAL), 72–92 (SFWF…CSWK), and 162–182 (VGPP…TYGV).

This sequence belongs to the Ccs1/CcsB family. As to quaternary structure, may interact with CcsA.

The protein localises to the cellular thylakoid membrane. In terms of biological role, required during biogenesis of c-type cytochromes (cytochrome c6 and cytochrome f) at the step of heme attachment. The sequence is that of Cytochrome c biogenesis protein CcsB from Prochlorococcus marinus (strain SARG / CCMP1375 / SS120).